The primary structure comprises 529 residues: Serine/threonine-protein kinase RIO2 (529 aa).

A Protein kinase domain is found at 97 to 273 (VGNQIGIGKE…RDVTCVRTFF (177 aa)). K123 serves as a coordination point for ATP. D228 acts as the Proton acceptor in catalysis. 2 disordered regions span residues 331–366 (RNRQ…KDHE) and 411–452 (EGYK…GHVA). Residues 337-346 (DLGEDEDDSD) are compositionally biased toward acidic residues. Residues 411–428 (EGYKDIELPPEDFKRPAD) show a composition bias toward basic and acidic residues. Acidic residues predominate over residues 429–447 (SENDDENDEDEEEGEEEDA).

The protein belongs to the protein kinase superfamily. RIO-type Ser/Thr kinase family. It depends on Mg(2+) as a cofactor. As to expression, expressed in pharynx (metacorpus and posterior bulbus). Expression is restricted to adult stage.

It carries out the reaction L-seryl-[protein] + ATP = O-phospho-L-seryl-[protein] + ADP + H(+). The catalysed reaction is L-threonyl-[protein] + ATP = O-phospho-L-threonyl-[protein] + ADP + H(+). Required for larval development. This is Serine/threonine-protein kinase RIO2 from Caenorhabditis elegans.